A 155-amino-acid chain; its full sequence is Small ribosomal subunit protein uS7c (155 aa).

It belongs to the universal ribosomal protein uS7 family. In terms of assembly, part of the 30S ribosomal subunit.

It localises to the plastid. Its subcellular location is the chloroplast. Its function is as follows. One of the primary rRNA binding proteins, it binds directly to 16S rRNA where it nucleates assembly of the head domain of the 30S subunit. This Pinus thunbergii (Japanese black pine) protein is Small ribosomal subunit protein uS7c (rps7).